We begin with the raw amino-acid sequence, 195 residues long: Putative NADH dehydrogenase/NAD(P)H nitroreductase RSc1004 (195 aa).

This sequence belongs to the nitroreductase family. HadB/RutE subfamily. FMN serves as cofactor.

In Ralstonia nicotianae (strain ATCC BAA-1114 / GMI1000) (Ralstonia solanacearum), this protein is Putative NADH dehydrogenase/NAD(P)H nitroreductase RSc1004.